Reading from the N-terminus, the 1433-residue chain is DNA-directed RNA polymerase subunit beta' (1433 aa).

Zn(2+)-binding residues include Cys-60, Cys-62, Cys-75, and Cys-78. Residues Asp-449, Asp-451, and Asp-453 each contribute to the Mg(2+) site. Cys-777, Cys-851, Cys-858, and Cys-861 together coordinate Zn(2+). 2 stretches are compositionally biased toward acidic residues: residues 1383 to 1393 (DSEEEEEELSE) and 1411 to 1433 (EEDEDEDELEEEADDSDDEDDDD). The tract at residues 1383–1433 (DSEEEEEELSELSEAAPVSTATLSKLVAEEDEDEDELEEEADDSDDEDDDD) is disordered.

This sequence belongs to the RNA polymerase beta' chain family. As to quaternary structure, the RNAP catalytic core consists of 2 alpha, 1 beta, 1 beta' and 1 omega subunit. When a sigma factor is associated with the core the holoenzyme is formed, which can initiate transcription. It depends on Mg(2+) as a cofactor. Requires Zn(2+) as cofactor.

It carries out the reaction RNA(n) + a ribonucleoside 5'-triphosphate = RNA(n+1) + diphosphate. DNA-dependent RNA polymerase catalyzes the transcription of DNA into RNA using the four ribonucleoside triphosphates as substrates. The sequence is that of DNA-directed RNA polymerase subunit beta' from Leptospira biflexa serovar Patoc (strain Patoc 1 / Ames).